A 616-amino-acid chain; its full sequence is Adenylosuccinate synthetase 1 (616 aa).

The interval 1–27 (MDKQAERGQSAGPVKTPQGTQPPAHNY) is disordered. Positions 17 to 27 (PQGTQPPAHNY) are enriched in polar residues. Residues 87 to 93 (GDEGKGK) and 117 to 119 (GHT) each bind GTP. The active-site Proton acceptor is the aspartate 88. Mg(2+) is bound by residues aspartate 88 and glycine 117. IMP is bound by residues 88 to 91 (DEGK), 115 to 118 (NAGH), threonine 202, lysine 216, glutamine 328, threonine 343, and lysine 472. The active-site Proton donor is the histidine 118. Position 468–474 (468–474 (AVTKKPR)) interacts with substrate. Residues arginine 474 and 603-605 (GNG) each bind GTP.

It belongs to the adenylosuccinate synthetase family. As to quaternary structure, homodimer. Mg(2+) serves as cofactor.

The protein localises to the cytoplasm. It catalyses the reaction IMP + L-aspartate + GTP = N(6)-(1,2-dicarboxyethyl)-AMP + GDP + phosphate + 2 H(+). Its pathway is purine metabolism; AMP biosynthesis via de novo pathway; AMP from IMP: step 1/2. Its function is as follows. Plays an important role in the salvage pathway for purine nucleotide biosynthesis. Catalyzes the first committed step in the biosynthesis of AMP from IMP. In Trypanosoma cruzi (strain CL Brener), this protein is Adenylosuccinate synthetase 1.